An 855-amino-acid chain; its full sequence is Valine--tRNA ligase (855 aa).

The short motif at 44-54 (PYPTGNFHIGN) is the 'HIGH' region element. The short motif at 522 to 526 (KMSKS) is the 'KMSKS' region element. Lysine 525 is an ATP binding site.

The protein belongs to the class-I aminoacyl-tRNA synthetase family. ValS type 2 subfamily.

The protein resides in the cytoplasm. It carries out the reaction tRNA(Val) + L-valine + ATP = L-valyl-tRNA(Val) + AMP + diphosphate. In terms of biological role, catalyzes the attachment of valine to tRNA(Val). As ValRS can inadvertently accommodate and process structurally similar amino acids such as threonine, to avoid such errors, it has a 'posttransfer' editing activity that hydrolyzes mischarged Thr-tRNA(Val) in a tRNA-dependent manner. The polypeptide is Valine--tRNA ligase (Methanothrix thermoacetophila (strain DSM 6194 / JCM 14653 / NBRC 101360 / PT) (Methanosaeta thermophila)).